We begin with the raw amino-acid sequence, 71 residues long: Protein SlyX homolog (71 aa).

Belongs to the SlyX family.

The protein is Protein SlyX homolog of Thioalkalivibrio sulfidiphilus (strain HL-EbGR7).